Reading from the N-terminus, the 721-residue chain is ATP-dependent zinc metalloprotease FtsH (721 aa).

The Cytoplasmic segment spans residues methionine 1 to arginine 44. A helical membrane pass occupies residues isoleucine 45–phenylalanine 65. Residues serine 66–proline 190 lie on the Extracellular side of the membrane. The chain crosses the membrane as a helical span at residues glutamine 191 to leucine 211. Residues arginine 212–asparagine 721 are Cytoplasmic-facing. Glycine 279 to threonine 286 contacts ATP. Position 498 (histidine 498) interacts with Zn(2+). Glutamate 499 is an active-site residue. Positions 502 and 577 each coordinate Zn(2+). The disordered stretch occupies residues asparagine 686–asparagine 721. Basic and acidic residues predominate over residues glutamate 700 to asparagine 721.

This sequence in the central section; belongs to the AAA ATPase family. In the C-terminal section; belongs to the peptidase M41 family. In terms of assembly, homohexamer. It depends on Zn(2+) as a cofactor.

The protein localises to the cell membrane. In terms of biological role, acts as a processive, ATP-dependent zinc metallopeptidase for both cytoplasmic and membrane proteins. Plays a role in the quality control of integral membrane proteins. This Ureaplasma parvum serovar 3 (strain ATCC 27815 / 27 / NCTC 11736) protein is ATP-dependent zinc metalloprotease FtsH.